Here is a 1648-residue protein sequence, read N- to C-terminus: Kinesin-like protein KIF14 (1648 aa).

The disordered stretch occupies residues 1-27 (MSLHSTHNRNNSGDILDIPSSQNSSSL). A required for PRC1-binding region spans residues 1–356 (MSLHSTHNRN…AGKDPLKVEN (356 aa)). Serine 12 and serine 272 each carry phosphoserine. Threonine 277 is subject to Phosphothreonine. Phosphoserine is present on serine 346. The required for microtubule-binding with high affinity stretch occupies residues 356 to 737 (NSQVTVAVRV…AAQRNSRNID (382 aa)). One can recognise a Kinesin motor domain in the interval 358–701 (QVTVAVRVRP…LRYANQARLI (344 aa)). Residue 447-454 (GQTGSGKS) participates in ATP binding. Residues 705–791 (AKVNEDMNAK…QETKELQKAG (87 aa)) adopt a coiled-coil conformation. The 67-residue stretch at 825–891 (TTVGKYKPNS…LRHGDRVILG (67 aa)) folds into the FHA domain. Residues 901 to 1648 (PVEVQKGKRP…ECTPSRIQWV (748 aa)) are required for CIT-binding. Residue threonine 915 is modified to Phosphothreonine. Residues 922-1079 (KDFEFAKNEL…QNRNNRDKTF (158 aa)) are a coiled coil. 2 positions are modified to phosphoserine: serine 937 and serine 1292. Coiled-coil stretches lie at residues 1332-1348 (TNIA…VKKL) and 1468-1500 (ENIF…VNRA). A disordered region spans residues 1600-1648 (NTKEEHQQSKSSGIDGSKNKGVPKRVYELHGSSPAVSSEECTPSRIQWV). The segment covering 1633 to 1648 (PAVSSEECTPSRIQWV) has biased composition (polar residues).

This sequence belongs to the TRAFAC class myosin-kinesin ATPase superfamily. Kinesin family. As to quaternary structure, directly interacts with PRC1 within a complex also containing KIF4A, KIF20A and KIF23; targets to the central spindle. Directly interacts with CIT depending on the activation state of the kinase (stronger interaction with the kinase-dead form); targets to the midbody. Interacts with ARRB2; the interaction is detected in the nucleus upon OR1D2 stimulation. Interacts with AKT1; the interaction is detected in the plasma membrane upon INS stimulation and promotes AKT1 phosphorylation. Interacts with SVIL; at midbody during cytokinesis. Interacts with RADIL (via PDZ domain); recruits RADIL to the microtubule network restricting RADIL from interaction with activated RAP1A.

It localises to the nucleus. Its subcellular location is the cytoplasm. The protein resides in the cytoskeleton. The protein localises to the spindle. It is found in the midbody. Functionally, microtubule motor protein that binds to microtubules with high affinity through each tubulin heterodimer and has an ATPase activity. Plays a role in many processes like cell division, cytokinesis and also in cell proliferation and apoptosis. During cytokinesis, targets to central spindle and midbody through its interaction with PRC1 and CIT respectively. Regulates cell growth through regulation of cell cycle progression and cytokinesis. During cell cycle progression acts through SCF-dependent proteasomal ubiquitin-dependent protein catabolic process which controls CDKN1B degradation, resulting in positive regulation of cyclins, including CCNE1, CCND1 and CCNB1. During late neurogenesis, regulates the cerebellar, cerebral cortex and olfactory bulb development through regulation of apoptosis, cell proliferation and cell division. Also is required for chromosome congression and alignment during mitotic cell cycle process. Regulates cell spreading, focal adhesion dynamics, and cell migration through its interaction with RADIL resulting in regulation of RAP1A-mediated inside-out integrin activation by tethering RADIL on microtubules. This is Kinesin-like protein KIF14 from Homo sapiens (Human).